Reading from the N-terminus, the 719-residue chain is B3 domain-containing protein Os03g0120900 (719 aa).

A DNA-binding region (TF-B3) is located at residues 7-110; it reads HHHFIKVMVG…HFMVLPFGLN (104 aa). Disordered stretches follow at residues 328-381 and 412-443; these read RGSF…RSEQ and EEPQ…RNAV. Over residues 351 to 366 the composition is skewed to basic and acidic residues; the sequence is DSAENTLKERSEERQP. The segment covering 416–430 has biased composition (polar residues); that stretch reads HNQGENEGNLDQVNN.

The protein resides in the nucleus. This Oryza sativa subsp. japonica (Rice) protein is B3 domain-containing protein Os03g0120900.